Consider the following 217-residue polypeptide: Trichothecene biosynthesis transcription regulator TRI6 (217 aa).

The C2H2-type zinc-finger motif lies at 185–215 (VRCPWHDQEGQQCLRVFSRVDNMRDHYRRIH).

The protein resides in the nucleus. Its function is as follows. Transcriptional activator of part of the core trichothecene biosynthesis cluster. The protein is Trichothecene biosynthesis transcription regulator TRI6 of Fusarium sporotrichioides.